The chain runs to 340 residues: Arginine N-succinyltransferase subunit beta (340 aa).

It belongs to the succinylarginine dihydrolase family. Heterotetramer of two alpha and two beta subunits.

The catalysed reaction is succinyl-CoA + L-arginine = N(2)-succinyl-L-arginine + CoA + H(+). Its pathway is amino-acid degradation; L-arginine degradation via AST pathway; L-glutamate and succinate from L-arginine: step 1/5. The protein is Arginine N-succinyltransferase subunit beta (aruG) of Pseudomonas aeruginosa (strain ATCC 15692 / DSM 22644 / CIP 104116 / JCM 14847 / LMG 12228 / 1C / PRS 101 / PAO1).